A 287-amino-acid polypeptide reads, in one-letter code: MFPYYPLRLLKSLQLLVWASVLLALTFIFSIFSISVTNVLSISFLRIPFALFGWIFGPIWGFIFGFLSDTIDWLTKGYVWFWMFALQKPLFAFLAGIVKGIYLVRKNASNYKVDFWVLQTLLVTFFVVSVTLLLLYLTNNEFQQIGTKNFQTADLSVNVVVLQIITLVSFVIFFLVTEGFLGFVYVKKRNKEQALLTIYSLVLMVLMSVVVSILLGTIAAIEFITFINNGRPSNNFVLYGVYFFLLPRVLVQALLLPIYVALFYPLIGIVENNLKNYLLLFTLSWKS.

This is an uncharacterized protein from Mycoplasma genitalium (strain ATCC 33530 / DSM 19775 / NCTC 10195 / G37) (Mycoplasmoides genitalium).